Reading from the N-terminus, the 440-residue chain is Ribosomal protein uS12 methylthiotransferase RimO (440 aa).

The MTTase N-terminal domain maps to 2–117 (VKVGFVSLGC…LPNVIKKLYE (116 aa)). C11, C47, C80, C156, C160, and C163 together coordinate [4Fe-4S] cluster. In terms of domain architecture, Radical SAM core spans 142–371 (ATPKFYAYIK…LNLQRKISLE (230 aa)). The TRAM domain occupies 374 to 440 (RKRISKKYEV…FEYDLVGEVI (67 aa)).

This sequence belongs to the methylthiotransferase family. RimO subfamily. It depends on [4Fe-4S] cluster as a cofactor.

Its subcellular location is the cytoplasm. The enzyme catalyses L-aspartate(89)-[ribosomal protein uS12]-hydrogen + (sulfur carrier)-SH + AH2 + 2 S-adenosyl-L-methionine = 3-methylsulfanyl-L-aspartate(89)-[ribosomal protein uS12]-hydrogen + (sulfur carrier)-H + 5'-deoxyadenosine + L-methionine + A + S-adenosyl-L-homocysteine + 2 H(+). Functionally, catalyzes the methylthiolation of an aspartic acid residue of ribosomal protein uS12. The sequence is that of Ribosomal protein uS12 methylthiotransferase RimO from Caldicellulosiruptor saccharolyticus (strain ATCC 43494 / DSM 8903 / Tp8T 6331).